The sequence spans 464 residues: MSDLVPLSRKPAPAAGDPAPSPAAPPRKVYVHTFGCQMNESDSDRMVELLGRHAYARAASADEADLILLNTCAVREKAEQKLLSALGRYREVKARRGALIAVSGCVAQQEKDRLLARVPYVDFVFGPDNIARLPEMVERARGERFAETGWMDSEEYVFPRADAEAARGRATAFVTAMKGCDNVCAFCIVPHTRGREVSRPFPDVVAECAALAAVGVREVTLIGQNVNSYGGGCTFADLLRRVAAVPGIDRIRFTTSHPHDLSGALVEVFRDEPKVMPHFHLPVQSGSDAVLRRMRRDYSVAEYLDRFDRLRAARPGIAITTDFIVGFPGETDADFEASLALLERARFEQSFSFVFSPRPHTVAAVRLGSAPEWQDVPRDVAVARLERLLAAQRRIAGEILAAELGKVVEVLVEGPSDEPGERLGRTPENRVVHLTADEAAAPAGARVPVRITRAGGSSLSGTLA.

Residues 1-25 are disordered; it reads MSDLVPLSRKPAPAAGDPAPSPAAP. Residues 27 to 142 form the MTTase N-terminal domain; the sequence is RKVYVHTFGC…LPEMVERARG (116 aa). Residues cysteine 36, cysteine 72, cysteine 105, cysteine 180, cysteine 184, and cysteine 187 each contribute to the [4Fe-4S] cluster site. The Radical SAM core domain occupies 166–398; that stretch reads ARGRATAFVT…LAAQRRIAGE (233 aa). The TRAM domain occupies 401–464; sequence AAELGKVVEV…GGSSLSGTLA (64 aa).

Belongs to the methylthiotransferase family. MiaB subfamily. In terms of assembly, monomer. [4Fe-4S] cluster is required as a cofactor.

It is found in the cytoplasm. It carries out the reaction N(6)-dimethylallyladenosine(37) in tRNA + (sulfur carrier)-SH + AH2 + 2 S-adenosyl-L-methionine = 2-methylsulfanyl-N(6)-dimethylallyladenosine(37) in tRNA + (sulfur carrier)-H + 5'-deoxyadenosine + L-methionine + A + S-adenosyl-L-homocysteine + 2 H(+). In terms of biological role, catalyzes the methylthiolation of N6-(dimethylallyl)adenosine (i(6)A), leading to the formation of 2-methylthio-N6-(dimethylallyl)adenosine (ms(2)i(6)A) at position 37 in tRNAs that read codons beginning with uridine. This Anaeromyxobacter dehalogenans (strain 2CP-C) protein is tRNA-2-methylthio-N(6)-dimethylallyladenosine synthase.